The sequence spans 352 residues: MDVAHPEEVTRFSPDILMEKFNVSEACFLPPPISIQLILQLTWLDIGVFAALTAMTVLTIAIYLEIVCYLMDKVKCPIKRKTLMWNSAAPTVIAITSCLGLWVPRAIMFVDMAAAMYFGVGFYLMLLIIVQGYGGEEAMLQHLATHTIRISTGPCCCCCPCLPHIHLTRQKYKIFVLGAFQVAFLRPALFLLGVVLWTNGLYDPDDWSSTSIFLWLNLFLGVSTILGLWPVNVLFRHSKVLMADQKLTCKFALFQAILILSSLQNSIIGTLAGAGHIGCAPPYSARTRGQQMNNQLLIIEMFFVGILTRISYRKRDDRPGHRHVGEVQQIVRECDQPAIADQQADHSSISHI.

Residues 1-45 (MDVAHPEEVTRFSPDILMEKFNVSEACFLPPPISIQLILQLTWLD) lie on the Extracellular side of the membrane. A glycan (N-linked (GlcNAc...) asparagine) is linked at N22. A helical transmembrane segment spans residues 46 to 66 (IGVFAALTAMTVLTIAIYLEI). At 67–82 (VCYLMDKVKCPIKRKT) the chain is on the cytoplasmic side. Residues 83–103 (LMWNSAAPTVIAITSCLGLWV) form a helical membrane-spanning segment. The Extracellular segment spans residues 104-108 (PRAIM). A helical transmembrane segment spans residues 109-129 (FVDMAAAMYFGVGFYLMLLII). Topologically, residues 130–173 (VQGYGGEEAMLQHLATHTIRISTGPCCCCCPCLPHIHLTRQKYK) are cytoplasmic. A helical membrane pass occupies residues 174–194 (IFVLGAFQVAFLRPALFLLGV). The Extracellular segment spans residues 195–210 (VLWTNGLYDPDDWSST). A helical transmembrane segment spans residues 211–231 (SIFLWLNLFLGVSTILGLWPV). The Cytoplasmic portion of the chain corresponds to 232 to 250 (NVLFRHSKVLMADQKLTCK). A helical transmembrane segment spans residues 251–271 (FALFQAILILSSLQNSIIGTL). Residues 272–294 (AGAGHIGCAPPYSARTRGQQMNN) lie on the Extracellular side of the membrane. Residues 295–312 (QLLIIEMFFVGILTRISY) form a helical membrane-spanning segment. Residues 313-352 (RKRDDRPGHRHVGEVQQIVRECDQPAIADQQADHSSISHI) are Cytoplasmic-facing.

It belongs to the OST-alpha family. In terms of assembly, interacts with slc51b. The Ost-alpha/Ost-beta complex is a heterodimer composed of alpha (slc51a) and beta (slc51b) subunit. Expressed in liver.

The protein resides in the cell membrane. It is found in the endoplasmic reticulum membrane. The catalysed reaction is taurocholate(out) = taurocholate(in). It carries out the reaction prostaglandin E2(out) = prostaglandin E2(in). It catalyses the reaction estrone 3-sulfate(out) = estrone 3-sulfate(in). The enzyme catalyses dehydroepiandrosterone 3-sulfate(out) = dehydroepiandrosterone 3-sulfate(in). The catalysed reaction is tauroursodeoxycholate(out) = tauroursodeoxycholate(in). It carries out the reaction glycoursodeoxycholate(out) = glycoursodeoxycholate(in). It catalyses the reaction glycocholate(out) = glycocholate(in). The enzyme catalyses taurochenodeoxycholate(out) = taurochenodeoxycholate(in). The catalysed reaction is glycochenodeoxycholate(out) = glycochenodeoxycholate(in). It carries out the reaction taurodeoxycholate(out) = taurodeoxycholate(in). It catalyses the reaction glycodeoxycholate(out) = glycodeoxycholate(in). Functionally, essential component of the Ost-alpha/Ost-beta complex, a heterodimer that acts as the intestinal basolateral transporter responsible for the translocation of bile acids (such as taurocholate), steroids (such as estrone sulfate), and eicosanoids (such as prostaglandin E2). The protein is Organic solute transporter subunit alpha (slc51a) of Leucoraja erinaceus (Little skate).